A 232-amino-acid polypeptide reads, in one-letter code: Ubiquinone biosynthesis O-methyltransferase (232 aa).

S-adenosyl-L-methionine contacts are provided by R36, G55, D76, and M120.

The protein belongs to the methyltransferase superfamily. UbiG/COQ3 family.

The enzyme catalyses a 3-demethylubiquinol + S-adenosyl-L-methionine = a ubiquinol + S-adenosyl-L-homocysteine + H(+). The catalysed reaction is a 3-(all-trans-polyprenyl)benzene-1,2-diol + S-adenosyl-L-methionine = a 2-methoxy-6-(all-trans-polyprenyl)phenol + S-adenosyl-L-homocysteine + H(+). The protein operates within cofactor biosynthesis; ubiquinone biosynthesis. O-methyltransferase that catalyzes the 2 O-methylation steps in the ubiquinone biosynthetic pathway. The sequence is that of Ubiquinone biosynthesis O-methyltransferase from Paraburkholderia xenovorans (strain LB400).